The sequence spans 545 residues: MTKNYIFITGGVVSSLGKGIAAASLGAILKARNLNITIIKLDPYINVDPGTISPIQHGEVFVTEDGAETDLDLGHYERFIHTKMTFLNNFTTGGVYSQVLKKERRGDYLGATIQVIPHITNAIKERIILCSKNSNIILVEIGGTVGDIESLPFLEAIRQMAVDIGRKNVIYIHLTLVPYIATAGEIKTKPTQHSVKQLLSIGIQPDILICRSEKTVPLHERKKIALFCNVPVDAVISLKDVNSIYKIPKLLKNQKLDDYICNYFKLNVPEADLQEWEEVIYAEKNFNNTIVIGIIGKYIKLPDAYKSVMEALKHAGFKNKIKVDIQLINSQEVENKNFQILKNLNGILIPGGFGDRGIVGKLLSIQYARENHIPYFGICLGMQIAIIEFAQNVVGIKEANSTEFDPQCKYPIIDLIKNRPNNSSKNYNKIENRINLGGTMRLGSQPCKLSANSLSRKLYNQEIIIERHRHRYEVNNLLFKKIEAAGLQVTGRSQKNNVVEIIELSNHPWFLACQFHPEFTSTPRDGHPLFIDFIKSAGKHKKNFI.

The segment at 1–266 (MTKNYIFITG…DDYICNYFKL (266 aa)) is amidoligase domain. S14 contributes to the CTP binding site. UTP is bound at residue S14. ATP contacts are provided by residues 15 to 20 (SLGKGI) and D72. Positions 72 and 140 each coordinate Mg(2+). CTP-binding positions include 147–149 (DIE), 187–192 (KTKPTQ), and K223. Residues 187–192 (KTKPTQ) and K223 contribute to the UTP site. 239 to 241 (KDV) contacts ATP. A Glutamine amidotransferase type-1 domain is found at 291–543 (VIGIIGKYIK…IKSAGKHKKN (253 aa)). G352 contacts L-glutamine. The active-site Nucleophile; for glutamine hydrolysis is the C379. Residues 380 to 383 (LGMQ), E403, and R471 each bind L-glutamine. Catalysis depends on residues H516 and E518.

The protein belongs to the CTP synthase family. As to quaternary structure, homotetramer.

The catalysed reaction is UTP + L-glutamine + ATP + H2O = CTP + L-glutamate + ADP + phosphate + 2 H(+). The enzyme catalyses L-glutamine + H2O = L-glutamate + NH4(+). It carries out the reaction UTP + NH4(+) + ATP = CTP + ADP + phosphate + 2 H(+). The protein operates within pyrimidine metabolism; CTP biosynthesis via de novo pathway; CTP from UDP: step 2/2. Allosterically activated by GTP, when glutamine is the substrate; GTP has no effect on the reaction when ammonia is the substrate. The allosteric effector GTP functions by stabilizing the protein conformation that binds the tetrahedral intermediate(s) formed during glutamine hydrolysis. Inhibited by the product CTP, via allosteric rather than competitive inhibition. Catalyzes the ATP-dependent amination of UTP to CTP with either L-glutamine or ammonia as the source of nitrogen. Regulates intracellular CTP levels through interactions with the four ribonucleotide triphosphates. This Buchnera aphidicola subsp. Acyrthosiphon pisum (strain Tuc7) protein is CTP synthase.